A 388-amino-acid polypeptide reads, in one-letter code: Staphopain A (388 aa).

A signal peptide spans 1 to 25 (MKRNFPKLIALSLIFSLSVTPIANA). Residues 26-214 (ESNSNIKAKD…TSQFKSNNYT (189 aa)) constitute a propeptide that is removed on maturation. Residues Cys238, His334, and Asn355 contribute to the active site.

The protein belongs to the peptidase C47 family. In terms of assembly, in the cytoplasm, prematurely activated/folded ScpA forms a stable non-covalent complex with ScpB. In terms of processing, cleavage leads to the activation of ScpA probably by an auto-catalytic manner.

The protein localises to the secreted. The catalysed reaction is Broad endopeptidase action on proteins including elastin, but rather limited hydrolysis of small-molecule substrates. Assays are conveniently made with hemoglobin, casein or Z-Phe-Arg-NHMec as substrate.. Prematurely activated/folded staphopain A is inhibited by staphostatin A (ScpB), which is probably required to protect staphylococcal cytoplasmic proteins from degradation by ScpA. Cysteine protease that plays an important role in the inhibition of host innate immune response. Cleaves host elastins found in connective tissues, pulmonary surfactant protein A in the lungs, and the chemokine receptor CXCR2 on leukocytes. Proteolytic cleavage of surfactant protein A impairs bacterial phagocytosis by neutrophils while CXCR2 degradation blocks neutrophil activation and chemotaxis. Additionally, promotes vascular leakage by activating the plasma kallikerin/kinin system, resulting in hypotension. This chain is Staphopain A (sspP), found in Staphylococcus aureus (strain COL).